The chain runs to 199 residues: MRTSHMLEQLMEALRCLPGVGPKSAQRMAFHLLQRDRKGGLQLADALSQSMTEIGHCAECRTFTEEEVCHICTNPKRQENGQICVVESPADIAAVEATGQYSGRYFVLMGHLSPLDGIGPSDIGLDVLDYRLRRGDISEVILATNPTVEGEATAHYIAELCREHQVEASRIAHGVPVGGELELVDGTTLSHSLLGRHKI.

The C4-type zinc finger occupies 57 to 72; it reads CAECRTFTEEEVCHIC. The Toprim domain maps to 81 to 176; that stretch reads GQICVVESPA…EASRIAHGVP (96 aa).

The protein belongs to the RecR family.

May play a role in DNA repair. It seems to be involved in an RecBC-independent recombinational process of DNA repair. It may act with RecF and RecO. In Vibrio parahaemolyticus serotype O3:K6 (strain RIMD 2210633), this protein is Recombination protein RecR.